A 126-amino-acid chain; its full sequence is Ribosome-binding factor A (126 aa).

The protein belongs to the RbfA family. As to quaternary structure, monomer. Binds 30S ribosomal subunits, but not 50S ribosomal subunits or 70S ribosomes.

It is found in the cytoplasm. One of several proteins that assist in the late maturation steps of the functional core of the 30S ribosomal subunit. Associates with free 30S ribosomal subunits (but not with 30S subunits that are part of 70S ribosomes or polysomes). Required for efficient processing of 16S rRNA. May interact with the 5'-terminal helix region of 16S rRNA. The chain is Ribosome-binding factor A from Treponema pallidum (strain Nichols).